The chain runs to 156 residues: Small ribosomal subunit protein uS7 (156 aa).

Belongs to the universal ribosomal protein uS7 family. In terms of assembly, part of the 30S ribosomal subunit. Contacts proteins S9 and S11.

Its function is as follows. One of the primary rRNA binding proteins, it binds directly to 16S rRNA where it nucleates assembly of the head domain of the 30S subunit. Is located at the subunit interface close to the decoding center, probably blocks exit of the E-site tRNA. The chain is Small ribosomal subunit protein uS7 from Arthrobacter sp. (strain FB24).